The primary structure comprises 41 residues: Histone H3.2 (41 aa).

Residues 1-41 (MARAKQTARKSTGAEAPRKQLASKAARKSAPATGGIKKPHR) are disordered.

It belongs to the histone H3 family. As to quaternary structure, the nucleosome is a histone octamer containing two molecules each of H2A, H2B, H3 and H4 assembled in one H3-H4 heterotetramer and two H2A-H2B heterodimers. The octamer wraps approximately 147 bp of DNA.

Its subcellular location is the nucleus. It is found in the chromosome. Its function is as follows. Core component of nucleosome. Nucleosomes wrap and compact DNA into chromatin, limiting DNA accessibility to the cellular machineries which require DNA as a template. Histones thereby play a central role in transcription regulation, DNA repair, DNA replication and chromosomal stability. DNA accessibility is regulated via a complex set of post-translational modifications of histones, also called histone code, and nucleosome remodeling. The sequence is that of Histone H3.2 from Tetrahymena borealis.